A 510-amino-acid chain; its full sequence is Light-independent protochlorophyllide reductase subunit B (510 aa).

Aspartate 36 contributes to the [4Fe-4S] cluster binding site. Residue aspartate 296 is the Proton donor of the active site. 431-432 (GM) contributes to the substrate binding site.

It belongs to the ChlB/BchB/BchZ family. Protochlorophyllide reductase is composed of three subunits; ChlL, ChlN and ChlB. Forms a heterotetramer of two ChlB and two ChlN subunits. The cofactor is [4Fe-4S] cluster.

The catalysed reaction is chlorophyllide a + oxidized 2[4Fe-4S]-[ferredoxin] + 2 ADP + 2 phosphate = protochlorophyllide a + reduced 2[4Fe-4S]-[ferredoxin] + 2 ATP + 2 H2O. Its pathway is porphyrin-containing compound metabolism; chlorophyll biosynthesis (light-independent). Functionally, component of the dark-operative protochlorophyllide reductase (DPOR) that uses Mg-ATP and reduced ferredoxin to reduce ring D of protochlorophyllide (Pchlide) to form chlorophyllide a (Chlide). This reaction is light-independent. The NB-protein (ChlN-ChlB) is the catalytic component of the complex. The protein is Light-independent protochlorophyllide reductase subunit B of Synechococcus sp. (strain JA-3-3Ab) (Cyanobacteria bacterium Yellowstone A-Prime).